Here is a 185-residue protein sequence, read N- to C-terminus: Ribosome-recycling factor (185 aa).

The interval 141–161 (KQEKDKKISEDDLKRAEKEVQ) is disordered.

This sequence belongs to the RRF family.

The protein localises to the cytoplasm. Responsible for the release of ribosomes from messenger RNA at the termination of protein biosynthesis. May increase the efficiency of translation by recycling ribosomes from one round of translation to another. This is Ribosome-recycling factor from Geotalea uraniireducens (strain Rf4) (Geobacter uraniireducens).